Here is a 333-residue protein sequence, read N- to C-terminus: MATLQEKLITPIVAGSTTPNNKITVVGVGQVGMACAISILGKGLCDELALVDVLEDKLKGEMMDLQHGSLFLQTHKIVADKDLRVTANSKIVVVTAGVRQQEGESRLNLVQRNVNVFKFIIPQIMKYSPNCTILVVSNPVDILTYVTWKLSGLPKHRVIGSGCNLDSARFRHLMAEKLGIHPTSCHGWILGEHGDSSVAVWSGVNVAGVSLQELNPAMGTDKDSENWKEVHKMVVDSAYEVIKLKGYTNWAIGLSVADLIESYVKNLCRVHPVSTMVKGMYGIENEVFLSLPCVLSASGLTSVINQKLKDEEVAQLRKSADTLWSIQKDLKDL.

Residues 29–57 and Arg99 contribute to the NAD(+) site; that span reads GQVG…LEDK. Arg106, Asn138, and Arg169 together coordinate substrate. Residue Asn138 coordinates NAD(+). The active-site Proton acceptor is the His193. Thr248 is a binding site for substrate.

It belongs to the LDH/MDH superfamily. LDH family. Homotetramer.

The protein resides in the cytoplasm. It carries out the reaction (S)-lactate + NAD(+) = pyruvate + NADH + H(+). It functions in the pathway fermentation; pyruvate fermentation to lactate; (S)-lactate from pyruvate: step 1/1. Functionally, interconverts simultaneously and stereospecifically pyruvate and lactate with concomitant interconversion of NADH and NAD(+). This Pelodiscus sinensis japonicus (Chinese soft-shelled turtle) protein is L-lactate dehydrogenase B chain (LDHB).